Here is a 2360-residue protein sequence, read N- to C-terminus: Nucleoprotein TPR (2360 aa).

Position 2 is an N-acetylalanine (Ala2). The interval 3-13 is sufficient for interaction with TPR; sequence AVLQQVLERPE. Residues 14-117 form a necessary for interaction with HSF1 region; it reads LNKLPKSTQN…GIQSQFTRAK (104 aa). A coiled-coil region spans residues 24–370; that stretch reads KLEKFLAEQQ…SATKRKGAIL (347 aa). N6-acetyllysine occurs at positions 252, 312, and 345. Ser379 carries the phosphoserine modification. A coiled-coil region spans residues 423-603; the sequence is LDEIVKEVEA…RESRQHQMQL (181 aa). 3 positions are modified to N6-acetyllysine: Lys428, Lys457, and Lys477. Residues 437-513 are necessary for association to the NPC; sequence LKRQREEYER…LMELEEARGN (77 aa). Phosphoserine is present on residues Ser522, Ser523, and Ser632. Positions 664–1172 form a coiled coil; it reads ETIEAKAALK…IEKLSDKVVT (509 aa). 4 positions are modified to N6-acetyllysine: Lys713, Lys723, Lys748, and Lys755. Positions 915 to 924 are enriched in polar residues; the sequence is LASQSTQRTG. Residues 915-939 form a disordered region; it reads LASQSTQRTGKGQPGDRDDVDDLKS. Over residues 928–939 the composition is skewed to basic and acidic residues; the sequence is PGDRDDVDDLKS. Phosphoserine is present on residues Ser1180 and Ser1185. Coiled coils occupy residues 1215 to 1420 and 1472 to 1629; these read EVAQ…LDAK and VQEM…QRDE. The tract at residues 1218-1320 is necessary for interaction with HSF1; the sequence is QVESLRYRQR…NAELSEKSGM (103 aa). 2 disordered regions span residues 1479–1520 and 1618–1673; these read KDNL…TAQL and EHQE…PTPV. Composition is skewed to basic and acidic residues over residues 1503–1512 and 1618–1630; these read LSEKETEARS and EHQE…RDEP. Positions 1632 to 1651 are enriched in polar residues; sequence EPTNKAPEQQRQITLKTTPA. Lys1689 is subject to N6-acetyllysine. Thr1691 is modified (phosphothreonine). Residues 1801 to 1826 show a composition bias toward polar residues; that stretch reads QSSPVERPSTSTAVFGTVSATPSSSL. The tract at residues 1801–2122 is disordered; it reads QSSPVERPST…TPGIGGMQQH (322 aa). The interval 1811-1866 is sufficient and essential for mediating its nuclear import; the sequence is STAVFGTVSATPSSSLPKRAREEEEDSTIEAGDQVSDDTVEMPLPKKLKTVTPVGT. The span at 1866-1880 shows a compositional bias: acidic residues; the sequence is TEEEVMAEESTDGEA. Over residues 1881–1892 the composition is skewed to polar residues; it reads ETQTYNQDSQDS. Ser1892 is modified (phosphoserine). Low complexity predominate over residues 1923 to 1934; it reads QSDQQTTSSQDG. 2 stretches are compositionally biased toward acidic residues: residues 1945–1986 and 1996–2017; these read DSDD…EDSN and DGYE…ETEE. Residues 2023–2061 show a composition bias toward polar residues; it reads ESNQRAADSQNSGEGNTSAAESSFSQEVAREQQPTSASE. A phosphoserine mark is found at Ser2031, Ser2034, Ser2045, Ser2047, and Ser2070. An omega-N-methylarginine mark is found at Arg2103 and Arg2108. A phosphothreonine mark is found at Thr2113 and Thr2134. Position 2152 is a phosphoserine (Ser2152). Arg2160 carries the omega-N-methylarginine modification. The segment covering 2224 to 2241 has biased composition (polar residues); that stretch reads ESTTSDASEHASQSVPMV. Residues 2224–2360 form a disordered region; sequence ESTTSDASEH…RGGINRGNIN (137 aa). Over residues 2242 to 2254 the composition is skewed to low complexity; the sequence is TTSTGTLSTTNET. Acidic residues-rich tracts occupy residues 2256–2269 and 2282–2296; these read AGDD…ETES and SQQE…DESD. Positions 2297 to 2317 are enriched in low complexity; that stretch reads LPSTSQDPPSSSSVDTSSSQP. Residues Arg2340, Arg2342, and Arg2351 each carry the asymmetric dimethylarginine modification. Residues 2349–2360 show a composition bias toward gly residues; it reads GGRGGINRGNIN.

Belongs to the TPR family. In terms of assembly, homodimer. Part of the nuclear pore complex (NPC). Associates with the XPO1/CRM1-mediated nuclear export complex, the Importin alpha/Importin beta receptor and the dynein 1 complex. Interacts (via C-terminal domain) with the KPNB1; the interaction occurs in a RanGTP-dependent manner. Interacts (via C-terminal region and phosphorylated form) with MAPK1/ERK2 (via phosphorylated form); the interaction requires dimerization of MAPK1/ERK2 and increases following EGF stimulation. Interacts with MAPK3/ERK1; the interaction increases following EGF stimulation. Interacts (via coiled coil region) with NUP153; the interaction is direct. Interacts with HSF1; the interaction increases in a stress-responsive manner and stimulates export of stress-induced HSP70 mRNA. Interacts with huntingtin/HTT; the interaction is inhibited by aggregated huntingtin/HTT forms with expanded polyglutamine stretch. Interacts with MAD1L1 (via N-terminal region), MAD2L1, and TTK; the interactions occurs in a microtubule-independent manner. Interacts (via middle region) with DYNLL1. Interacts with DCTN1, dynein, NUP153 and tubulin. Interacts with IFI204 (via C-terminal region). Interacts with IFI203. Interacts with MTA1. Interacts with ZC3HC1; this interaction mediates ZC3HC1 nuclear envelopes (NE)-association but also required for proper positioning of a substantial amount of TPR at the nuclear basket (NB). Phosphorylated. Phosphorylation occurs on serine and threonine residues (comprised in the C-terminal region) by MAPK1/ERK2 and stabilizes the interaction between these two proteins.

The protein localises to the nucleus. Its subcellular location is the nucleus membrane. It is found in the nucleus envelope. The protein resides in the nuclear pore complex. It localises to the cytoplasm. The protein localises to the cytoskeleton. Its subcellular location is the spindle. It is found in the chromosome. The protein resides in the centromere. It localises to the kinetochore. Component of the nuclear pore complex (NPC), a complex required for the trafficking across the nuclear envelope. Functions as a scaffolding element in the nuclear phase of the NPC essential for normal nucleocytoplasmic transport of proteins and mRNAs, plays a role in the establishment of nuclear-peripheral chromatin compartmentalization in interphase, and in the mitotic spindle checkpoint signaling during mitosis. Involved in the quality control and retention of unspliced mRNAs in the nucleus; in association with NUP153, regulates the nuclear export of unspliced mRNA species bearing constitutive transport element (CTE) in a NXF1- and KHDRBS1-independent manner. Negatively regulates both the association of CTE-containing mRNA with large polyribosomes and translation initiation. Does not play any role in Rev response element (RRE)-mediated export of unspliced mRNAs. Implicated in nuclear export of mRNAs transcribed from heat shock gene promoters; associates both with chromatin in the HSP70 promoter and with mRNAs transcribed from this promoter under stress-induced conditions. Modulates the nucleocytoplasmic transport of activated MAPK1/ERK2 and huntingtin/HTT and may serve as a docking site for the XPO1/CRM1-mediated nuclear export complex. Also plays a role as a structural and functional element of the perinuclear chromatin distribution; involved in the formation and/or maintenance of NPC-associated perinuclear heterochromatin exclusion zones (HEZs). Finally, acts as a spatial regulator of the spindle-assembly checkpoint (SAC) response ensuring a timely and effective recruitment of spindle checkpoint proteins like MAD1L1 and MAD2L1 to unattached kinetochore during the metaphase-anaphase transition before chromosome congression. Its N-terminus is involved in activation of oncogenic kinases. Plays a role in the regulation of nuclear protein export. The sequence is that of Nucleoprotein TPR from Rattus norvegicus (Rat).